The following is a 128-amino-acid chain: Cytochrome b (128 aa).

3 consecutive transmembrane segments (helical) span residues 25–45 (FGSMLLSCLTIQIITGFFLAI), 69–90 (WIMQNTHAIGXSLFFICIYIHI), and 105–125 (WLSGTTLLITLMATASXXMCY). Heme b contacts are provided by His75 and His89. Residue His126 participates in a ubiquinone binding.

Belongs to the cytochrome b family. In terms of assembly, the cytochrome bc1 complex contains 3 respiratory subunits (MT-CYB, CYC1 and UQCRFS1), 2 core proteins (UQCRC1 and UQCRC2) and probably 6 low-molecular weight proteins. It depends on heme b as a cofactor.

The protein resides in the mitochondrion inner membrane. Functionally, component of the ubiquinol-cytochrome c reductase complex (complex III or cytochrome b-c1 complex) that is part of the mitochondrial respiratory chain. The b-c1 complex mediates electron transfer from ubiquinol to cytochrome c. Contributes to the generation of a proton gradient across the mitochondrial membrane that is then used for ATP synthesis. This is Cytochrome b (MT-CYB) from Crotalus viridis viridis (Prairie rattlesnake).